Here is an 862-residue protein sequence, read N- to C-terminus: MNPFSSGTRLSDMIRAIRASKTAAEERAVVRKECAAIRASINENDQDYRHRDLAKLMFIHMLGYPTHFGQMECLKLIASPGFPEKRIGYLGLMLLLDERQEVLMLVTNSLKQDLNHTNQYIVGLALCALGNICSAEMARDLAPEVERLLQFRDPNIRKKAALCAIRIIRKVPDLSENFINPGAALLKEKHHGVLITGVHLCTEICKVSSEALEYFRKKCTEGLVKTLRDIANSPYSPEYDVAGITDPFLHIRLLKLLRVLGQGDADASDCMNDILAQVASKTESNKNAGNAILYECVQTIMSIEENGGLRVLAINILGKFLSNRDNNIRYVALNMLMRSLTVDSQAVQRHRATILECVKDSDASIQKRALELIYLLVNENNVKPLAKELIEYLEVSEQDFKGDLTAKICSIVEKFAPEKIWYIDQMLKVLSEAGTYVKEDVWHALIVVITNAPDLHGYTVRALYRALHTSFEQETLVRVAIWCIGEYADLLVNNAGMLDLEDPITVTESDAVDVVENAIKHHLSDVTTKAMALIALLKISSRFPSCSERVKSIIGQNKGSFVLELQQRSLEFSSVIQKHQNIRSSLVERMPVLDEATFSGRRAGSLPASVSTSGKSPLGIPNGVAKAAAPLVDLLDLGSDDTPAPTSSSNNFLQDLLGVDLSQPSAQPGAMQPSQAGADILMDLLSIGTPAPVQNGSANGDLLSIQDNNAPIAPSLTSPTAPSSMMDLLDGFGPTPPKSEDKSAAYPSIVAFESSSLKIEFNFTKQSENPQTTDIVANFINLTPNVYTEFLFQAAVPKFLQLHLDPASSNSLPANGNIKQTMRVTNSQKGKKPIVMRMRVGYKINGKDVLEEGQINNFPRGL.

HEAT repeat units follow at residues 1–28 (MNPF…EERA), 29–65 (VVRK…LGYP), 101–136 (EVLM…CSAE), 137–173 (MARD…KVPD), 308–345 (GLRV…VDSQ), 346–382 (AVQR…ENNV), 384–417 (PLAK…KFAP), 418–454 (EKIW…NAPD), 458–496 (YTVR…NNAG), 507–545 (TESD…RFPS), and 560–599 (SFVL…ATFS). The region spanning 744-859 (AAYPSIVAFE…LEEGQINNFP (116 aa)) is the GAE domain.

It belongs to the adaptor complexes large subunit family. Adaptor protein complex 1 (AP-1) is a heterotetramer composed of two large adaptins (gamma-type subunit and beta-type subunit), a medium adaptin (mu-type subunit) and a small adaptin (sigma-type subunit).

The protein localises to the golgi apparatus. It is found in the cytoplasmic vesicle. The protein resides in the clathrin-coated vesicle membrane. Its function is as follows. Subunit of clathrin-associated adaptor protein complex 1 that plays a role in protein sorting at the trans-Golgi network and early endosomes (TGN/EE). The AP complexes mediate both the recruitment of clathrin to membranes and the recognition of sorting signals within the cytosolic tails of transmembrane cargo molecules. The chain is AP-1 complex subunit gamma-2 from Arabidopsis thaliana (Mouse-ear cress).